Consider the following 296-residue polypeptide: Phosphoribosylaminoimidazole-succinocarboxamide synthase (296 aa).

Belongs to the SAICAR synthetase family.

It catalyses the reaction 5-amino-1-(5-phospho-D-ribosyl)imidazole-4-carboxylate + L-aspartate + ATP = (2S)-2-[5-amino-1-(5-phospho-beta-D-ribosyl)imidazole-4-carboxamido]succinate + ADP + phosphate + 2 H(+). The protein operates within purine metabolism; IMP biosynthesis via de novo pathway; 5-amino-1-(5-phospho-D-ribosyl)imidazole-4-carboxamide from 5-amino-1-(5-phospho-D-ribosyl)imidazole-4-carboxylate: step 1/2. This Syntrophotalea carbinolica (strain DSM 2380 / NBRC 103641 / GraBd1) (Pelobacter carbinolicus) protein is Phosphoribosylaminoimidazole-succinocarboxamide synthase.